A 341-amino-acid polypeptide reads, in one-letter code: Phosphate acyltransferase (341 aa).

The protein belongs to the PlsX family. In terms of assembly, homodimer. Probably interacts with PlsY.

It localises to the cytoplasm. The catalysed reaction is a fatty acyl-[ACP] + phosphate = an acyl phosphate + holo-[ACP]. The protein operates within lipid metabolism; phospholipid metabolism. Catalyzes the reversible formation of acyl-phosphate (acyl-PO(4)) from acyl-[acyl-carrier-protein] (acyl-ACP). This enzyme utilizes acyl-ACP as fatty acyl donor, but not acyl-CoA. The polypeptide is Phosphate acyltransferase (Vibrio campbellii (strain ATCC BAA-1116)).